Reading from the N-terminus, the 131-residue chain is Profilin-4 (131 aa).

The cysteines at positions 13 and 115 are disulfide-linked. The Involved in PIP2 interaction motif lies at 81–97 (AVIRGKKGAGGITVKKT). Position 111 is a phosphothreonine (Thr-111).

Belongs to the profilin family. As to quaternary structure, occurs in many kinds of cells as a complex with monomeric actin in a 1:1 ratio. Post-translationally, phosphorylated by MAP kinases.

It localises to the cytoplasm. Its subcellular location is the cytoskeleton. In terms of biological role, binds to actin and affects the structure of the cytoskeleton. At high concentrations, profilin prevents the polymerization of actin, whereas it enhances it at low concentrations. The sequence is that of Profilin-4 from Olea europaea (Common olive).